A 260-amino-acid polypeptide reads, in one-letter code: Hydroxyacylglutathione hydrolase (260 aa).

Zn(2+)-binding residues include His-55, His-57, Asp-59, His-60, His-116, Asp-133, and His-171.

The protein belongs to the metallo-beta-lactamase superfamily. Glyoxalase II family. Monomer. Zn(2+) serves as cofactor.

It carries out the reaction an S-(2-hydroxyacyl)glutathione + H2O = a 2-hydroxy carboxylate + glutathione + H(+). It functions in the pathway secondary metabolite metabolism; methylglyoxal degradation; (R)-lactate from methylglyoxal: step 2/2. Functionally, thiolesterase that catalyzes the hydrolysis of S-D-lactoyl-glutathione to form glutathione and D-lactic acid. This Shewanella loihica (strain ATCC BAA-1088 / PV-4) protein is Hydroxyacylglutathione hydrolase.